A 149-amino-acid polypeptide reads, in one-letter code: Putative oligosaccharyltransferase complex subunit CG9662 (149 aa).

The Cytoplasmic segment spans residues 1–32 (MIETLYNLPFHILVPPNIKVRRFSIPMPSPMA). Residues 33-53 (VFSVILFSYFLVTGGIIYDVI) traverse the membrane as a helical segment. At 54 to 83 (VEPPSLGATVDEHGHSRPVAFMPYRVNGQY) the chain is on the extracellular side. A helical transmembrane segment spans residues 84-104 (IMEGLASSFLFTVGGLGFIIM). Residues 105-117 (DQTHTPGKTNLNR) lie on the Cytoplasmic side of the membrane. A helical membrane pass occupies residues 118–138 (LLLTAMGFIFILVSFFTTWLF). The Extracellular portion of the chain corresponds to 139–149 (MRMKLPSYLQP).

The protein belongs to the OSTC family. Component of the oligosaccharyltransferase (OST) complex.

The protein localises to the membrane. Subunit of the oligosaccharyl transferase (OST) complex that catalyzes the initial transfer of a defined glycan (Glc(3)Man(9)GlcNAc(2) in eukaryotes) from the lipid carrier dolichol-pyrophosphate to an asparagine residue within an Asn-X-Ser/Thr consensus motif in nascent polypeptide chains, the first step in protein N-glycosylation. N-glycosylation occurs cotranslationally and the complex associates with the Sec61 complex at the channel-forming translocon complex that mediates protein translocation across the endoplasmic reticulum (ER). All subunits are required for a maximal enzyme activity. This is Putative oligosaccharyltransferase complex subunit CG9662 from Drosophila melanogaster (Fruit fly).